Here is a 311-residue protein sequence, read N- to C-terminus: MALPILFDCDPGHDDAIAIVLALASPELDVKAITSSAGNQTPDKTLRNVLRMLTLLNRTDISVAGGAVKPLMRDLIIADNVHGESGLDGPALPEPAFAPLDCTAVELMAKVLRESPEPVTIVSTGPQTNVALLLNSHPELHAKIARIVIMGGAMGLGNWTPAAEFNIYVDPEAAEIVFQSGIRVVMAGLDVTHKAQIHREDTERFRAIGNPVSTIVAELLDFFFEYHKDEKWGFIGAPLHDPCTIAWLLKPELFTTVERWVGVETQGKYTQGMTVVDYYFLSGNKPNATVMVDVDRQGFVDLLAERLQYYA.

Histidine 240 is an active-site residue.

This sequence belongs to the IUNH family. RihA subfamily.

Its function is as follows. Hydrolyzes cytidine or uridine to ribose and cytosine or uracil, respectively. The protein is Pyrimidine-specific ribonucleoside hydrolase RihA of Salmonella newport (strain SL254).